Consider the following 464-residue polypeptide: Chromosomal replication initiator protein DnaA (464 aa).

The segment at M1–P82 is domain I, interacts with DnaA modulators. Residues P82–S127 are domain II. The interval A91–P118 is disordered. Residues N128–A344 form a domain III, AAA+ region region. ATP-binding residues include G172, G174, K175, and T176. Positions N345–S464 are domain IV, binds dsDNA.

The protein belongs to the DnaA family. Oligomerizes as a right-handed, spiral filament on DNA at oriC.

The protein localises to the cytoplasm. Its function is as follows. Plays an essential role in the initiation and regulation of chromosomal replication. ATP-DnaA binds to the origin of replication (oriC) to initiate formation of the DNA replication initiation complex once per cell cycle. Binds the DnaA box (a 9 base pair repeat at the origin) and separates the double-stranded (ds)DNA. Forms a right-handed helical filament on oriC DNA; dsDNA binds to the exterior of the filament while single-stranded (ss)DNA is stabiized in the filament's interior. The ATP-DnaA-oriC complex binds and stabilizes one strand of the AT-rich DNA unwinding element (DUE), permitting loading of DNA polymerase. After initiation quickly degrades to an ADP-DnaA complex that is not apt for DNA replication. Binds acidic phospholipids. This chain is Chromosomal replication initiator protein DnaA, found in Sodalis glossinidius (strain morsitans).